Reading from the N-terminus, the 265-residue chain is UPF0354 protein GWCH70_2742 (265 aa).

It belongs to the UPF0354 family.

The protein is UPF0354 protein GWCH70_2742 of Geobacillus sp. (strain WCH70).